We begin with the raw amino-acid sequence, 420 residues long: uncharacterized protein (420 aa).

A run of 6 helical transmembrane segments spans residues 26 to 46 (IFLLLVILVFVPIGFVFQSVI), 66 to 86 (SAIKSITLLFLLLLFVNWFTF), 231 to 251 (VILAFYVTQKILIMILFATVL), 276 to 296 (IPVNVFAMTIAIAIRFVPSLL), 317 to 337 (GFLVKMRSLSSLVVPMVSIAF), and 369 to 389 (IDILALFLVFAWFVVIIFLTI).

The protein belongs to the CbiQ family.

It is found in the cell membrane. This is an uncharacterized protein from Mycoplasma genitalium (strain ATCC 33530 / DSM 19775 / NCTC 10195 / G37) (Mycoplasmoides genitalium).